We begin with the raw amino-acid sequence, 423 residues long: F-box/LRR-repeat protein 2 (423 aa).

The F-box domain maps to 9–55; it reads GLINKKLPKELLLRIFSFLDIVTLCRCAQISKAWNILALDGSNWQRV. LRR repeat units follow at residues 61–87, 88–113, 114–139, 140–165, 166–191, 192–217, 218–243, 244–269, 270–295, 296–321, 322–350, 351–375, and 376–401; these read QTDV…SLRG, CIGV…NLNG, CTKI…DLTS, CVSV…NLSW, CDQI…LLRG, CTQL…NLQS, CSRI…CLSG, CSNL…EAAR, CSHL…DLEE, CVLI…SLSH, CELI…ELDN, CLLV…ELYD, and CQQV…AYFA. Positions 80–90 are interaction with Calmodulin; it reads LRKLSLRGCIG. Residue Lys-201 forms a Glycyl lysine isopeptide (Lys-Gly) (interchain with G-Cter in ubiquitin) linkage. Thr-404 carries the phosphothreonine; by GSK3-beta modification. Residue Cys-420 is the site of S-geranylgeranyl cysteine attachment. Positions 420-423 match the CAAX motif motif; sequence CVIL.

As to quaternary structure, part of the SCF (SKP1-CUL1-F-box) E3 ubiquitin-protein ligase complex SCF(FBXL2) composed of CUL1, SKP1, RBX1 and FBXL2. Interacts with calmodulin; may antagonize substrate ubiquitination by SCF(FBXL2). May interact with PIK3R1. Interacts with PTPN13. Phosphorylated by GSK-beta (GSK3B), promoting recognition by FBXO3, leading to its ubiquitination by the SCF(FBXO3) complex. In terms of processing, ubiquitinated at Lys-201 by the SCF(FBXO3) complex in response to lipopolysaccharide (LPS), leading to its degradation by the proteasome.

It localises to the membrane. It participates in protein modification; protein ubiquitination. Calcium-activated substrate recognition component of the SCF (SKP1-cullin-F-box protein) E3 ubiquitin-protein ligase complex, SCF(FBXL2), which mediates the ubiquitination and subsequent proteasomal degradation of target proteins. Unlike many F-box proteins, FBXL2 does not seem to target phosphodegron within its substrates but rather calmodulin-binding motifs and is thereby antagonized by calmodulin. This is the case for the cyclins CCND2 and CCND3 which polyubiquitination and subsequent degradation are inhibited by calmodulin. Through CCND2 and CCND3 degradation induces cell-cycle arrest in G(0). SCF(FBXL2) also mediates PIK3R2 ubiquitination and proteasomal degradation thereby regulating phosphatidylinositol 3-kinase signaling and autophagy. PCYT1A monoubiquitination by SCF(FBXL2) and subsequent degradation regulates synthesis of phosphatidylcholine, which is utilized for formation of membranes and of pulmonary surfactant. The SCF(FBXL2) complex acts as a regulator of inflammation by mediating ubiquitination and degradation of TRAF proteins (TRAF1, TRAF2, TRAF3, TRAF4, TRAF5 and TRAF6). The SCF(FBXL2) complex acts as a negative regulator of the NLRP3 inflammasome by mediating ubiquitination and degradation of NLRP3. The protein is F-box/LRR-repeat protein 2 of Mus musculus (Mouse).